A 153-amino-acid chain; its full sequence is Melatonin receptor type 1A X2.0 (153 aa).

Residues 1–12 (HSSWYNRLFSNS) lie on the Cytoplasmic side of the membrane. A helical membrane pass occupies residues 13-33 (GTICYVGLVWVLALGAILPNL). At 34–57 (FVGSLRCDPRIFSCTFAQYVSSYY) the chain is on the extracellular side. Residues 58 to 78 (TIAVVIFHFFLPIGVVSYCYL) form a helical membrane-spanning segment. Over 79 to 112 (RIWVLVLNIRHRVKPDRHLHHQTWPYNIHGFITM) the chain is Cytoplasmic. Residues 113 to 133 (FVVFVLFAVCWGPLNIIGLTV) traverse the membrane as a helical segment. Over 134-145 (AIYPPLGDSIPQ) the chain is Extracellular. The helical transmembrane segment at 146 to 153 (WLFVASYF) threads the bilayer.

The protein belongs to the G-protein coupled receptor 1 family.

It is found in the cell membrane. High affinity receptor for melatonin. The activity of this receptor is mediated by pertussis toxin sensitive G proteins that inhibits adenylate cyclase activity. The sequence is that of Melatonin receptor type 1A X2.0 from Xenopus laevis (African clawed frog).